The chain runs to 314 residues: CD-NTase-associated protein 12 (314 aa).

Positions 5–129 (RIFIGSSSEE…VKGISLARFK (125 aa)) constitute a TIR domain. Residues 160-314 (SSTLAAVYYE…DLIKIVDEDN (155 aa)) are STING domain. Residues F171, P234, and D252 each coordinate 3',3'-c-di-GMP.

The protein in the C-terminal section; belongs to the bacterial STING family. As to quaternary structure, homodimer. Forms homodimers; in the presence of c-di-GMP forms filaments with an ordered array of parallel-stacked subunits.

It carries out the reaction NAD(+) + H2O = ADP-D-ribose + nicotinamide + H(+). NAD(+) hydrolase activity is strongly stimulated by c-di-GMP, weakly by 3'3'-cGAMP, very weakly by c-di-AMP but not at all by 2'3'-cGAMP. Self-association of TIR domains is required for NADase activity. Functionally, effector protein of a CBASS antiviral system with NAD(+) hydrolase activity. CBASS (cyclic oligonucleotide-based antiphage signaling system) provides immunity against bacteriophage. The CD-NTase protein synthesizes cyclic nucleotides in response to infection; these serve as specific second messenger signals. The signals activate a diverse range of effectors, leading to bacterial cell death and thus abortive phage infection. A type I-(GG) CBASS system. Binds c-di-GMP (synthesized by the cognate CdnE encoded upstream in the same operon), and about 10-fold less well 3'3'-cGAMP, but not c-di-AMP, 2'-3'-cGAMP or cUMP-AMP (tested without the N-terminal TIR domain). Upon activation by c-di-GMP forms filaments which hydrolyze NAD(+); filament formation is required for enzyme activation. The chain is CD-NTase-associated protein 12 from Capnocytophaga granulosa (strain ATCC 51502 / DSM 11449 / JCM 8566 / LMG 16022 / NCTC 12948 / B0611).